The following is a 1485-amino-acid chain: Cystic fibrosis transmembrane conductance regulator (1485 aa).

The Cytoplasmic segment spans residues 1–78 (MQRSPVEDAN…SLLRAMARCY (78 aa)). Residues 79-99 (IKPFLLFGFLLYIGEATKTVQ) traverse the membrane as a helical segment. An ABC transmembrane type-1 1 domain is found at 83–353 (LLFGFLLYIG…CMVLRMTVTR (271 aa)). The Extracellular segment spans residues 100–123 (PQLLGRIIASFDPAHEPERANGYF). The helical transmembrane segment at 124 to 149 (LAFGLGLLFTARFLLLQPAMFGLHHL) threads the bilayer. At 150-195 (GMQIRIALFSIIYKKTLKLSSRVLDKISTGQLVSLMSANLGKFDQS) the chain is on the cytoplasmic side. The chain crosses the membrane as a helical span at residues 196-216 (LGMAHFIWISPLQCILCTGLI). Residues 217-224 (WELIDVNS) are Extracellular-facing. A helical transmembrane segment spans residues 225–245 (FCALAAISLLGVLQAFLSHKM). The Cytoplasmic segment spans residues 246–299 (GPYKAQKVLLTNKRLALTSEIMENLHSVKAYGWEEIMETLIKNIRQDEVKLTRK). A helical transmembrane segment spans residues 300–320 (IGSLRYFYSSAYFFSAIFVIV). Residues 321–340 (AAVVPHALSRGINLRRIFTT) are Extracellular-facing. A helical transmembrane segment spans residues 341 to 363 (LSYCMVLRMTVTRQLPGSIQMWY). Residues 364-856 (DTMRLIWKIE…YVRYVSNNKS (493 aa)) lie on the Cytoplasmic side of the membrane. Residues tryptophan 402, 457-464 (GSMGSGKS), and glutamine 492 contribute to the ATP site. The region spanning 424 to 645 (NGDAGLFFTN…RPDFSSLLLG (222 aa)) is the ABC transporter 1 domain. Residues 653 to 826 (SAERRCSILT…GILEEENIEA (174 aa)) form a disordered R region region. A helical transmembrane segment spans residues 857-877 (LLYVLIFILFIAAIEIAGSVA). The ABC transmembrane type-1 2 domain occupies 860–1163 (VLIFILFIAA…CVATSIAVDG (304 aa)). Over 878–924 (GIFLITDELWREEHQRSEPNMTKHSNASSSGQTYAITVTPTSSYYIL) the chain is Extracellular. Residues asparagine 897 and asparagine 903 are each glycosylated (N-linked (GlcNAc...) asparagine). A discontinuously helical transmembrane segment spans residues 925–946 (YIYVATSESLLAMGFFRGLPFV). Topologically, residues 947-996 (HTTITISKKLHQKMLHAVLSAPMSVLNTMKTGRIMNRFTKDMATIDDMLP) are cytoplasmic. Residues 997-1019 (LLMFDFVQLTVVVVGCILVVSIV) traverse the membrane as a helical segment. Topologically, residues 1020 to 1021 (RP) are extracellular. Residues 1022 to 1042 (YIFLAATPLAIIFIVMRKYFL) traverse the membrane as a helical segment. At 1043 to 1103 (RTGQQLKQLE…TATWFLYLST (61 aa)) the chain is on the cytoplasmic side. A helical membrane pass occupies residues 1104-1124 (LRWFLFRADILFVFFFTLAAW). At 1125 to 1138 (IAVGTNQDKPGEIG) the chain is on the extracellular side. The helical transmembrane segment at 1139 to 1159 (IIICLAMLILGTFQWCVATSI) threads the bilayer. Residues 1160–1485 (AVDGMMRSVD…AEDNIQDTRL (326 aa)) are Cytoplasmic-facing. The ABC transporter 2 domain occupies 1211-1444 (IEVRNLTVKY…TSHLKQAISP (234 aa)). Residues tyrosine 1220 and 1245 to 1252 (GRTGSGKS) contribute to the ATP site. The tract at residues 1452-1485 (PRRNSSMRTPQSKLSSVTQTLQEEAEDNIQDTRL) is disordered. A compositionally biased stretch (polar residues) spans 1454 to 1473 (RNSSMRTPQSKLSSVTQTLQ). The span at 1474-1485 (EEAEDNIQDTRL) shows a compositional bias: acidic residues. A PDZ-binding motif is present at residues 1483–1485 (TRL).

Belongs to the ABC transporter superfamily. ABCC family. CFTR transporter (TC 3.A.1.202) subfamily. Monomer; does not require oligomerization for channel activity. Interacts with cse1l; this interaction may down-regulate cftr activity. Post-translationally, phosphorylated; this activates the channel. Dephosphorylation strongly decreases ATPase activity. Phosphorylation at PKA sites activates the channel. Phosphorylation at PKC sites enhances the response to phosphorylation by PKA. In terms of tissue distribution, detected in gut epithelium (at protein level). Detected in kidney, spleen, intestine and liver. Detected in pancreatic duct epithelium at 5 dpf and throughout adult life.

Its subcellular location is the apical cell membrane. It is found in the early endosome membrane. It localises to the cell membrane. The protein localises to the recycling endosome membrane. The protein resides in the endoplasmic reticulum membrane. The catalysed reaction is ATP + H2O + closed Cl(-) channel = ADP + phosphate + open Cl(-) channel.. It catalyses the reaction chloride(in) = chloride(out). The enzyme catalyses hydrogencarbonate(in) = hydrogencarbonate(out). It carries out the reaction ATP + H2O = ADP + phosphate + H(+). Its function is as follows. Epithelial ion channel that plays an important role in the regulation of epithelial ion and water transport and fluid homeostasis. Mediates the transport of chloride ions across the cell membrane. Possesses an intrinsic ATPase activity and utilizes ATP to gate its channel; the passive flow of anions through the channel is gated by cycles of ATP binding and hydrolysis by the ATP-binding domains. The ion channel is also permeable to HCO(3)(-); selectivity depends on the extracellular chloride concentration. Exerts its function also by modulating the activity of other ion channels and transporters. Contributes to the regulation of the pH and the ion content of the epithelial fluid layer. Required for normal fluid homeostasis in the gut. Required for normal volume expansion and cell shape changes of Kupffer's vesicle during embryonic development and for normal establishment of left-right body patterning. Required for normal resistance to infection by P.aeruginosa strain PA14 and strain SMC573. This chain is Cystic fibrosis transmembrane conductance regulator, found in Danio rerio (Zebrafish).